A 475-amino-acid polypeptide reads, in one-letter code: UDP-glycosyltransferase 1 (475 aa).

His-15 serves as the catalytic Proton acceptor. His-15 contributes to the an anthocyanidin binding site. Asp-117 acts as the Charge relay in catalysis. UDP-alpha-D-glucose is bound by residues Ala-345, Gln-347, His-362, Trp-365, Asn-366, Ser-367, and Glu-370. Gly-385 is a binding site for an anthocyanidin. UDP-alpha-D-glucose is bound by residues Glu-386 and Gln-387.

Belongs to the UDP-glycosyltransferase family. Mostly expressed in leaves and flowers, and, to a lower extent, in roots and stems.

It catalyses the reaction (20S)-protopanaxadiol + UDP-alpha-D-glucose = (20S)-ginsenoside C-K + UDP + H(+). The enzyme catalyses (20S)-ginsenoside Rg3 + UDP-alpha-D-glucose = (20S)-ginsenoside Rd + UDP + H(+). The catalysed reaction is (20S)-ginsenoside Rh2 + UDP-alpha-D-glucose = (20S)-ginsenoside F2 + UDP + H(+). It carries out the reaction (20S)-protopanaxatriol + UDP-alpha-D-glucose = (20S)-ginsenoside F1 + UDP + H(+). It catalyses the reaction dammarenediol-II + UDP-alpha-D-glucose = (20S)-20-O-(beta-D-glucosyl)-3-hydroxydammarene + UDP + H(+). It participates in secondary metabolite biosynthesis; terpenoid biosynthesis. Its function is as follows. Component of the dammarane-type triterpene saponins (e.g. ginsenosides or panaxosides) biosynthetic pathway. Glycosyltransferase that catalyzes the biosynthesis of ginsenoside F1 from protopanaxatriol (PPT). Triggers C20-OH glycosylation of ginsenoside Rg3 to produce ginsenoside Rd. Mediates the conversion of protopanaxadiol (PPD) to the ginsenoside compound K. catalyzes the production of 20S-O-beta-(D-glucosyl)-dammarenediol II form dammarenediol II (DM). The protein is UDP-glycosyltransferase 1 of Panax ginseng (Korean ginseng).